The sequence spans 304 residues: Protoheme IX farnesyltransferase (304 aa).

9 helical membrane-spanning segments follow: residues 31–51, 58–78, 99–119, 126–146, 154–174, 180–200, 222–242, 243–263, and 284–304; these read VNTL…PDGL, VAAT…NCLI, LAPA…LTVL, LTMW…TVLL, IVIG…AVTG, ALLL…ALAL, FTRL…LLPF, ATRM…IGFL, and FSIL…YLPL.

This sequence belongs to the UbiA prenyltransferase family. Protoheme IX farnesyltransferase subfamily.

The protein localises to the cell inner membrane. The catalysed reaction is heme b + (2E,6E)-farnesyl diphosphate + H2O = Fe(II)-heme o + diphosphate. It participates in porphyrin-containing compound metabolism; heme O biosynthesis; heme O from protoheme: step 1/1. Converts heme B (protoheme IX) to heme O by substitution of the vinyl group on carbon 2 of heme B porphyrin ring with a hydroxyethyl farnesyl side group. This is Protoheme IX farnesyltransferase from Aromatoleum aromaticum (strain DSM 19018 / LMG 30748 / EbN1) (Azoarcus sp. (strain EbN1)).